The following is a 432-amino-acid chain: Thiol-specific monooxygenase (432 aa).

Residues 13–17 (GGGPG) and 46–47 (VW) contribute to the FAD site. Residue 65–66 (TN) coordinates NADP(+). 117–118 (EV) provides a ligand contact to FAD. 199 to 202 (SGQD) lines the NADP(+) pocket.

This sequence belongs to the FMO family. In terms of assembly, monomer. Requires FAD as cofactor.

In terms of biological role, flavin-dependent oxidation of thiol-containing compounds. Probably required for the correct folding of disulfide-bonded proteins. The polypeptide is Thiol-specific monooxygenase (FMO1) (Saccharomyces cerevisiae (strain ATCC 204508 / S288c) (Baker's yeast)).